Reading from the N-terminus, the 204-residue chain is Imidazoleglycerol-phosphate dehydratase (204 aa).

Belongs to the imidazoleglycerol-phosphate dehydratase family.

It localises to the cytoplasm. The catalysed reaction is D-erythro-1-(imidazol-4-yl)glycerol 3-phosphate = 3-(imidazol-4-yl)-2-oxopropyl phosphate + H2O. It participates in amino-acid biosynthesis; L-histidine biosynthesis; L-histidine from 5-phospho-alpha-D-ribose 1-diphosphate: step 6/9. The chain is Imidazoleglycerol-phosphate dehydratase from Corynebacterium jeikeium (strain K411).